The following is a 457-amino-acid chain: Bifunctional protein GlmU (457 aa).

Residues M1–R229 form a pyrophosphorylase region. Residues L11–G14, K25, Q76, G81–T82, Y103–D105, G140, E154, N169, and N227 each bind UDP-N-acetyl-alpha-D-glucosamine. D105 lines the Mg(2+) pocket. N227 contacts Mg(2+). The tract at residues L230–A250 is linker. Residues G251–K457 form an N-acetyltransferase region. 2 residues coordinate UDP-N-acetyl-alpha-D-glucosamine: R333 and K351. H363 functions as the Proton acceptor in the catalytic mechanism. The UDP-N-acetyl-alpha-D-glucosamine site is built by Y366 and N377. Acetyl-CoA is bound by residues A380, N386–Y387, S405, A423, and R440.

In the N-terminal section; belongs to the N-acetylglucosamine-1-phosphate uridyltransferase family. This sequence in the C-terminal section; belongs to the transferase hexapeptide repeat family. In terms of assembly, homotrimer. Mg(2+) is required as a cofactor.

Its subcellular location is the cytoplasm. It catalyses the reaction alpha-D-glucosamine 1-phosphate + acetyl-CoA = N-acetyl-alpha-D-glucosamine 1-phosphate + CoA + H(+). The catalysed reaction is N-acetyl-alpha-D-glucosamine 1-phosphate + UTP + H(+) = UDP-N-acetyl-alpha-D-glucosamine + diphosphate. The protein operates within nucleotide-sugar biosynthesis; UDP-N-acetyl-alpha-D-glucosamine biosynthesis; N-acetyl-alpha-D-glucosamine 1-phosphate from alpha-D-glucosamine 6-phosphate (route II): step 2/2. It functions in the pathway nucleotide-sugar biosynthesis; UDP-N-acetyl-alpha-D-glucosamine biosynthesis; UDP-N-acetyl-alpha-D-glucosamine from N-acetyl-alpha-D-glucosamine 1-phosphate: step 1/1. Its pathway is bacterial outer membrane biogenesis; LPS lipid A biosynthesis. Its function is as follows. Catalyzes the last two sequential reactions in the de novo biosynthetic pathway for UDP-N-acetylglucosamine (UDP-GlcNAc). The C-terminal domain catalyzes the transfer of acetyl group from acetyl coenzyme A to glucosamine-1-phosphate (GlcN-1-P) to produce N-acetylglucosamine-1-phosphate (GlcNAc-1-P), which is converted into UDP-GlcNAc by the transfer of uridine 5-monophosphate (from uridine 5-triphosphate), a reaction catalyzed by the N-terminal domain. This chain is Bifunctional protein GlmU, found in Photorhabdus laumondii subsp. laumondii (strain DSM 15139 / CIP 105565 / TT01) (Photorhabdus luminescens subsp. laumondii).